A 51-amino-acid chain; its full sequence is Protein I177L (51 aa).

A glycan (N-linked (GlcNAc...) asparagine; by host) is linked at Asn-11.

This sequence belongs to the asfivirus I177L family.

The protein resides in the virion. The protein is Protein I177L of Ornithodoros (relapsing fever ticks).